Consider the following 157-residue polypeptide: Stalk-specific protein B (157 aa).

The N-terminal stretch at 1-19 (MRSILILLSLLLTIAFASA) is a signal peptide.

It is found in the secreted. The sequence is that of Stalk-specific protein B (staB) from Dictyostelium discoideum (Social amoeba).